Reading from the N-terminus, the 510-residue chain is Light-independent protochlorophyllide reductase subunit B (510 aa).

Aspartate 36 serves as a coordination point for [4Fe-4S] cluster. The active-site Proton donor is the aspartate 296. 431 to 432 is a substrate binding site; the sequence is GM.

The protein belongs to the ChlB/BchB/BchZ family. As to quaternary structure, protochlorophyllide reductase is composed of three subunits; ChlL, ChlN and ChlB. Forms a heterotetramer of two ChlB and two ChlN subunits. [4Fe-4S] cluster serves as cofactor.

It carries out the reaction chlorophyllide a + oxidized 2[4Fe-4S]-[ferredoxin] + 2 ADP + 2 phosphate = protochlorophyllide a + reduced 2[4Fe-4S]-[ferredoxin] + 2 ATP + 2 H2O. It participates in porphyrin-containing compound metabolism; chlorophyll biosynthesis (light-independent). Its function is as follows. Component of the dark-operative protochlorophyllide reductase (DPOR) that uses Mg-ATP and reduced ferredoxin to reduce ring D of protochlorophyllide (Pchlide) to form chlorophyllide a (Chlide). This reaction is light-independent. The NB-protein (ChlN-ChlB) is the catalytic component of the complex. This Synechococcus sp. (strain JA-2-3B'a(2-13)) (Cyanobacteria bacterium Yellowstone B-Prime) protein is Light-independent protochlorophyllide reductase subunit B.